The primary structure comprises 492 residues: Glutamyl-tRNA(Gln) amidotransferase subunit A (492 aa).

Active-site charge relay system residues include Lys79 and Ser154. Ser178 functions as the Acyl-ester intermediate in the catalytic mechanism.

This sequence belongs to the amidase family. GatA subfamily. Heterotrimer of A, B and C subunits.

The catalysed reaction is L-glutamyl-tRNA(Gln) + L-glutamine + ATP + H2O = L-glutaminyl-tRNA(Gln) + L-glutamate + ADP + phosphate + H(+). Allows the formation of correctly charged Gln-tRNA(Gln) through the transamidation of misacylated Glu-tRNA(Gln) in organisms which lack glutaminyl-tRNA synthetase. The reaction takes place in the presence of glutamine and ATP through an activated gamma-phospho-Glu-tRNA(Gln). In Acinetobacter baumannii (strain ATCC 17978 / DSM 105126 / CIP 53.77 / LMG 1025 / NCDC KC755 / 5377), this protein is Glutamyl-tRNA(Gln) amidotransferase subunit A.